The sequence spans 295 residues: Nuclear transcription factor Y subunit A-2 (295 aa).

The Subunit association domain (SAD) motif lies at 139–165; sequence YVNSKQYHGIIRRRQSRAKAAAVLDQK. A DNA-binding region (NFYA/HAP2-type) is located at residues 173 to 198; sequence KPYMHHSRHLHALRRPRGSGGRFLNT. The span at 178 to 189 shows a compositional bias: basic residues; the sequence is HSRHLHALRRPR. The disordered stretch occupies residues 178–244; sequence HSRHLHALRR…VVHPENGTMN (67 aa). Over residues 197 to 209 the composition is skewed to polar residues; sequence NTKSQNLENSGTN. Residues 216–233 are compositionally biased toward low complexity; sequence SMQIQSQPKPQQSNSQNS.

This sequence belongs to the NFYA/HAP2 subunit family. In terms of assembly, heterotrimeric transcription factor composed of three components, NF-YA, NF-YB and NF-YC. NF-YB and NF-YC must interact and dimerize for NF-YA association and DNA binding. Component of a heat stress-inducible transcriptional complex with NF-YA and NF-YB subunits made, at least, of NFYA2, NFYB3 and DPB3-1 in cooperation with DREB2A. Ubiquitous. Expressed in seedlings, roots, petioles, hypocotyls, reproductive organ tissues and leaves.

The protein resides in the nucleus. Functionally, stimulates the transcription of various genes by recognizing and binding to a CCAAT motif in promoters. Promotes the expression of heat stress-inducible genes by contributing to the formation of a heat stress-specific transcriptional complex with NF-Y subunits (e.g. DPB3-1, NF-YA2 and NF-YB3) and DREB2A at the promoter of target genes, thus promoting heat tolerance. This Arabidopsis thaliana (Mouse-ear cress) protein is Nuclear transcription factor Y subunit A-2.